Consider the following 367-residue polypeptide: MLIEQAYLHGKPESSGLLRSQISDFQVFEELPFLPCGEGEHLFVHIRKTGANTLFVARELAKYFEVKEQLVSYAGLKDRFAVTEQWFGIHVPGKQEYNLDDLNIEGVEVLSYKRHNKKLRTGALTGNRFELILREVTAIKAFTERWQKIVEQGVPNYFGEQRFGIGGGNIERALSLFSGQKVKDKKKRGMYLSAARSHIFNSVLNERIQQQCFDKVAVGDVLMLAGTQSVFHLDEVDSAIQQRFTDKDVDITAPMWGAGELMTSNAPQVLEQEVATKNLEFCEGLPRFGLKQERRRIRLTVSDTDIELLSAEEDSAQEESNAVKISFFLPAGCYATTVLRELLNYQDMTTRIDKRETAVNSNQQDSA.

D78 (nucleophile) is an active-site residue. Positions 153–300 constitute a TRUD domain; the sequence is GVPNYFGEQR…KQERRRIRLT (148 aa).

Belongs to the pseudouridine synthase TruD family.

It carries out the reaction uridine(13) in tRNA = pseudouridine(13) in tRNA. Its function is as follows. Responsible for synthesis of pseudouridine from uracil-13 in transfer RNAs. The sequence is that of tRNA pseudouridine synthase D from Colwellia psychrerythraea (strain 34H / ATCC BAA-681) (Vibrio psychroerythus).